Consider the following 689-residue polypeptide: Glycine--tRNA ligase beta subunit (689 aa).

This sequence belongs to the class-II aminoacyl-tRNA synthetase family. As to quaternary structure, tetramer of two alpha and two beta subunits.

The protein resides in the cytoplasm. It catalyses the reaction tRNA(Gly) + glycine + ATP = glycyl-tRNA(Gly) + AMP + diphosphate. This Escherichia coli O139:H28 (strain E24377A / ETEC) protein is Glycine--tRNA ligase beta subunit.